The primary structure comprises 392 residues: GTPase Obg (392 aa).

An Obg domain is found at 1-159 (MKFVDEATIL…RDLQLELMLL (159 aa)). Positions 127–148 (NTRFKSSVNRTPRQKTMGTPGD) are disordered. Positions 129-143 (RFKSSVNRTPRQKTM) are enriched in polar residues. The 174-residue stretch at 160 to 333 (ADVGMLGMPN…LCWDVMTFII (174 aa)) folds into the OBG-type G domain. Residues 166–173 (GMPNAGKS), 191–195 (FTTLV), 213–216 (DIPG), 283–286 (NKID), and 314–316 (SAA) each bind GTP. S173 and T193 together coordinate Mg(2+). Positions 362–386 (EEAEAEAEDDEDWDDDWDEDDEEGV) are enriched in acidic residues. Positions 362–392 (EEAEAEAEDDEDWDDDWDEDDEEGVEFIYKR) are disordered.

The protein belongs to the TRAFAC class OBG-HflX-like GTPase superfamily. OBG GTPase family. In terms of assembly, monomer. Mg(2+) is required as a cofactor.

The protein localises to the cytoplasm. Its function is as follows. An essential GTPase which binds GTP, GDP and possibly (p)ppGpp with moderate affinity, with high nucleotide exchange rates and a fairly low GTP hydrolysis rate. Plays a role in control of the cell cycle, stress response, ribosome biogenesis and in those bacteria that undergo differentiation, in morphogenesis control. The sequence is that of GTPase Obg from Klebsiella pneumoniae subsp. pneumoniae (strain ATCC 700721 / MGH 78578).